The sequence spans 353 residues: Pleckstrin-2 (353 aa).

An N-acetylmethionine modification is found at M1. Residues 4 to 104 form the PH 1 domain; sequence GVLKEGFLVK…WAFEITGAIH (101 aa). Residue S120 is modified to Phosphoserine. Residues 139 to 225 enclose the DEP domain; it reads TSTGIRPSPN…DSTALYTFAE (87 aa). The PH 2 domain maps to 247–353; the sequence is TVVKQGYLSK…EWIEAIKKLT (107 aa).

In terms of tissue distribution, ubiquitous. Most abundant in the thymus, large bowel, small bowel, stomach, and prostate.

Its subcellular location is the cell projection. It localises to the lamellipodium membrane. The protein localises to the cytoplasm. It is found in the cytoskeleton. Its function is as follows. May help orchestrate cytoskeletal arrangement. Contribute to lamellipodia formation. Overexpression of pleckstrin 2 causes large lamellipodia and peripheral ruffle formation. The protein is Pleckstrin-2 (Plek2) of Mus musculus (Mouse).